We begin with the raw amino-acid sequence, 654 residues long: Potassium voltage-gated channel subfamily A member 4 (654 aa).

At 1-305 (MEVAMVSAES…LLFEYPESSS (305 aa)) the chain is on the cytoplasmic side. The interval 24-145 (QARARERERL…EEGRFYYSEE (122 aa)) is disordered. The span at 36–50 (SRAAAAAAVAAATAA) shows a compositional bias: low complexity. Positions 81 to 99 (GSRRRRRQRTEKKKLHHRQ) are enriched in basic residues. The residue at position 122 (S122) is a Phosphoserine. Residues 122 to 137 (SEEEEDEEEEEEEEEE) are compositionally biased toward acidic residues. Residues 306 to 327 (PARGIAIVSVLVILISIVIFCL) traverse the membrane as a helical segment. Topologically, residues 328–371 (ETLPEFRDDRDLIMALSAGGHSRLLNDTSAPHLENSGHTIFNDP) are extracellular. A glycan (N-linked (GlcNAc...) asparagine) is linked at N353. The chain crosses the membrane as a helical span at residues 372 to 393 (FFIVETVCIVWFSFEFVVRCFA). The Cytoplasmic portion of the chain corresponds to 394 to 404 (CPSQALFFKNI). Residues 405–425 (MNIIDIVSILPYFITLGTDLA) traverse the membrane as a helical segment. The Extracellular portion of the chain corresponds to 426–440 (QQQGGGNGQQQQAMS). The chain crosses the membrane as a helical; Voltage-sensor span at residues 441–461 (FAILRIIRLVRVFRIFKLSRH). Residues 462 to 476 (SKGLQILGHTLRASM) lie on the Cytoplasmic side of the membrane. Residues 463–476 (KGLQILGHTLRASM) are S4-S5 linker. Residues 477 to 498 (RELGLLIFFLFIGVILFSSAVY) form a helical membrane-spanning segment. The Extracellular portion of the chain corresponds to 499–512 (FAEADEPTTHFQSI). Positions 513 to 524 (PDAFWWAVVTMT) form an intramembrane region, helical. A Selectivity filter motif is present at residues 525–530 (TVGYGD). The stretch at 525-532 (TVGYGDMK) is an intramembrane region. Over 533 to 539 (PITVGGK) the chain is Extracellular. A helical membrane pass occupies residues 540-568 (IVGSLCAIAGVLTIALPVPVIVSNFNYFY). At 569 to 654 (HRETENEEQT…SNAKAVETDV (86 aa)) the chain is on the cytoplasmic side. Residue S600 is modified to Phosphoserine; by PKA. Basic and acidic residues predominate over residues 630–641 (CQGKGDESETDK). The tract at residues 630-654 (CQGKGDESETDKNNCSNAKAVETDV) is disordered. A PDZ-binding motif is present at residues 652–654 (TDV).

This sequence belongs to the potassium channel family. A (Shaker) (TC 1.A.1.2) subfamily. Kv1.4/KCNA4 sub-subfamily. In terms of assembly, homotetramer and heterotetramer of potassium channel proteins. Interacts with KCNAB1 and KCNAB2. Interacts with DLG1, DLG2 and DLG4 via their PDZ domains. Interacts with SIGMAR1. Detected in a complex with KCNA1. Interacts with KCNA2. Part of a complex containing KCNA1, KCNAB1 and LGI1. Interacts (via cytoplasmic N-terminal domain) with KCNRG. As to expression, expressed in the brain, lens and retina.

It is found in the cell membrane. Its subcellular location is the cell projection. The protein resides in the axon. The enzyme catalyses K(+)(in) = K(+)(out). Voltage-gated potassium channel that mediates transmembrane potassium transport in excitable membranes. Forms tetrameric potassium-selective channels through which potassium ions pass in accordance with their electrochemical gradient. The channel alternates between opened and closed conformations in response to the voltage difference across the membrane. Can form functional homotetrameric channels and heterotetrameric channels that contain variable proportions of KCNA1, KCNA2, KCNA4, KCNA5, and possibly other family members as well; channel properties depend on the type of alpha subunits that are part of the channel. Channel properties are modulated by cytoplasmic beta subunits that regulate the subcellular location of the alpha subunits and promote rapid inactivation. In vivo, membranes probably contain a mixture of heteromeric potassium channel complexes, making it difficult to assign currents observed in intact tissues to any particular potassium channel family member. Homotetrameric KCNA4 forms a potassium channel that opens in response to membrane depolarization, followed by rapid spontaneous channel closure. Likewise, a heterotetrameric channel formed by KCNA1 and KCNA4 shows rapid inactivation. This is Potassium voltage-gated channel subfamily A member 4 (Kcna4) from Mus musculus (Mouse).